The sequence spans 338 residues: Anthranilate phosphoribosyltransferase (338 aa).

5-phospho-alpha-D-ribose 1-diphosphate-binding positions include G81, 84–85, S89, 91–94, 109–117, and A121; these read GD, NVST, and KHGNRALSS. G81 serves as a coordination point for anthranilate. S93 serves as a coordination point for Mg(2+). N112 serves as a coordination point for anthranilate. R167 contributes to the anthranilate binding site. D226 and E227 together coordinate Mg(2+).

This sequence belongs to the anthranilate phosphoribosyltransferase family. Homodimer. Mg(2+) serves as cofactor.

It carries out the reaction N-(5-phospho-beta-D-ribosyl)anthranilate + diphosphate = 5-phospho-alpha-D-ribose 1-diphosphate + anthranilate. It participates in amino-acid biosynthesis; L-tryptophan biosynthesis; L-tryptophan from chorismate: step 2/5. In terms of biological role, catalyzes the transfer of the phosphoribosyl group of 5-phosphorylribose-1-pyrophosphate (PRPP) to anthranilate to yield N-(5'-phosphoribosyl)-anthranilate (PRA). In Rhodopseudomonas palustris (strain TIE-1), this protein is Anthranilate phosphoribosyltransferase.